Here is a 193-residue protein sequence, read N- to C-terminus: Epididymal-specific lipocalin-12 (193 aa).

The signal sequence occupies residues 1-19 (MGPWWALWLILTLPQILES). Cys88 and Cys193 are joined by a disulfide. N-linked (GlcNAc...) asparagine glycans are attached at residues Asn143 and Asn172.

The protein belongs to the calycin superfamily. Lipocalin family. As to quaternary structure, monomer. In terms of tissue distribution, expressed in epididymis.

The protein resides in the secreted. Binds all-trans retinoic acid and may act as a retinoid carrier protein within the epididymis. May play a role in male fertility. The protein is Epididymal-specific lipocalin-12 (Lcn12) of Mus musculus (Mouse).